The chain runs to 473 residues: Cysteine--tRNA ligase (473 aa).

Cys33 contacts Zn(2+). Positions 35 to 45 (ATVQGQPHIGH) match the 'HIGH' region motif. Positions 211, 236, and 240 each coordinate Zn(2+). Positions 267 to 271 (KMSKS) match the 'KMSKS' region motif. Position 270 (Lys270) interacts with ATP.

It belongs to the class-I aminoacyl-tRNA synthetase family. As to quaternary structure, monomer. It depends on Zn(2+) as a cofactor.

Its subcellular location is the cytoplasm. The catalysed reaction is tRNA(Cys) + L-cysteine + ATP = L-cysteinyl-tRNA(Cys) + AMP + diphosphate. This Mycobacterium leprae (strain Br4923) protein is Cysteine--tRNA ligase.